The sequence spans 299 residues: uncharacterized protein (299 aa).

The HTH lysR-type domain maps to 1 to 59; sequence MDKIHAMQLFIKVAELESFSRAADFFALPKGSVSRQIQALEHQLGTQLLQRTTRRVKLT. The H-T-H motif DNA-binding region spans 19 to 38; that stretch reads FSRAADFFALPKGSVSRQIQ.

This sequence belongs to the LysR transcriptional regulatory family.

This is an uncharacterized protein from Escherichia coli (strain K12).